A 324-amino-acid polypeptide reads, in one-letter code: tRNA-cytidine(32) 2-sulfurtransferase (324 aa).

The segment at 1-26 (MQDLIDSPTAARTPAEEKIRHEGNKL) is disordered. Residues 14–26 (PAEEKIRHEGNKL) are compositionally biased toward basic and acidic residues. The short motif at 55–60 (SGGKDS) is the PP-loop motif element. Residues Cys130, Cys133, and Cys221 each coordinate [4Fe-4S] cluster. The tract at residues 278-310 (RPDANGDTAFDPIDPEDPREDAGDACASSPADG) is disordered.

It belongs to the TtcA family. Homodimer. Mg(2+) is required as a cofactor. The cofactor is [4Fe-4S] cluster.

The protein localises to the cytoplasm. The enzyme catalyses cytidine(32) in tRNA + S-sulfanyl-L-cysteinyl-[cysteine desulfurase] + AH2 + ATP = 2-thiocytidine(32) in tRNA + L-cysteinyl-[cysteine desulfurase] + A + AMP + diphosphate + H(+). Its pathway is tRNA modification. In terms of biological role, catalyzes the ATP-dependent 2-thiolation of cytidine in position 32 of tRNA, to form 2-thiocytidine (s(2)C32). The sulfur atoms are provided by the cysteine/cysteine desulfurase (IscS) system. The polypeptide is tRNA-cytidine(32) 2-sulfurtransferase (Bordetella petrii (strain ATCC BAA-461 / DSM 12804 / CCUG 43448)).